Consider the following 620-residue polypeptide: Zinc metalloproteinase-disintegrin-like ACLD (620 aa).

A signal peptide spans 1-20 (MIQVLLVTLCLAVFPYQGSS). A propeptide spanning residues 21-189 (IILESGNVND…KKASQLNLTP (169 aa)) is cleaved from the precursor. Residues 199-395 (KYVEFVVVLD…RRPKCILNEP (197 aa)) enclose the Peptidase M12B domain. E202 lines the Ca(2+) pocket. 2 N-linked (GlcNAc...) asparagine glycosylation sites follow: N259 and N265. Position 286 (D286) interacts with Ca(2+). 3 disulfides stabilise this stretch: C310–C390, C350–C374, and C352–C357. H335 is a Zn(2+) binding site. Residue E336 is part of the active site. Zn(2+) is bound by residues H339 and H345. N373 carries an N-linked (GlcNAc...) asparagine glycan. Ca(2+) is bound by residues C390 and N393. Residue N396 is glycosylated (N-linked (GlcNAc...) asparagine). One can recognise a Disintegrin domain in the interval 403 to 489 (PPVCGNELLE…ECPTDRFQRN (87 aa)). Residues V405, N408, L410, E412, E415, and D418 each coordinate Ca(2+). Disulfide bonds link C406–C435, C417–C430, C419–C425, C429–C452, C443–C449, C448–C474, C461–C481, C468–C500, C493–C505, C512–C562, C527–C573, C540–C550, C557–C599, and C593–C604. The D/ECD-tripeptide signature appears at 467 to 469 (DCD). N-linked (GlcNAc...) asparagine glycosylation is found at N502 and N536.

This sequence belongs to the venom metalloproteinase (M12B) family. P-III subfamily. P-IIIa sub-subfamily. Monomer. Requires Zn(2+) as cofactor. Expressed by the venom gland.

The protein resides in the secreted. Its activity is regulated as follows. Inhibited by EDTA and O-phenanthroline. Not inhibited by PMSF, benzamidine, irreversible serine-proteinase inhibitors and cysteine proteinase inhibitor E-64. Is a potent activator of prothrombin (F2). Does not elicit any hemorrhagic response. Barely inhibits collagen-induced platelet aggregation. Binds neither collagen, nor the jararhagin-monoclonal antibody MAJar3. Hydrolyzes the Aalpha-chain of fibrin and fibrinogen, without affecting the Bbeta- and gamma-chains. Is capable of triggering endothelial pro-inflammatory and procoagulant cell responses, but fails to trigger apoptosis. Induces von Willebrand factor release, and the expression of both ICAM1 and E-selectin (SELE) (without increase in VCAM1) in endothelial cells (HUVEC). Is also able to up-regulate the synthesis of the coagulation factor TF (F3). Enhances nitric oxide (NO) generation, prostacyclin production and interleukin-8 release. The sequence is that of Zinc metalloproteinase-disintegrin-like ACLD from Agkistrodon contortrix laticinctus (Broad-banded copperhead).